The sequence spans 950 residues: MKLSELFNPDEFAARHLSFGDEAALLAAVGEKSMDDFVGNTVPQSIRMPSELDLPEALTEADALAKLKGIASKNMINKSYIGLGYYPTRVPNVILRNVLENPGWYTAYTPYQAEIAQGRLEALLNFQQVCIDLTGFPVAGASLLDEATAAAEAMAMAHRVGKVKSERFFVDARVYPQTLDVMKTRAKYFGFELVVGDFAQADEGEYFGALFQYVGKDGDVQDLQDVIGRLKAKGTIVAVSADIMSLVLLKSPAELGADIALGNTQRFGVPMGFGGPHAAYFAFKDEFKRSAPGRIIGVSKDASGKPALRMALSTREQHIRREKATSNICTAQALLANLAGMYAVYHGPEGVKRIANRIHALASAFADALVSDGINVVHKVFFDTVTVDFGNKEKADQVFAAALESGYNLRRVNDTQVAAAFHETSACEDLVDLYRAFTGKDTFAFADDVKGRLNAELLRQDDILQHPVFNRYHTEHEMLRYLKKLEDRDLAMNRSMISLGSCTMKLNATAEMLPITWAEFSDIHPYAPEAQTAGYRELLADMENSLKSITGFDAISFQPNSGAQGEYSGMLAIRRYQEAQGEAQRNICLIPKSAHGTNPATAAMLGLKVVVVDTDEHGNVNIDDLKAKAEQHRDALSAIMITYPSTHGVYEEGIRDICRIVHENGGQVYMDGANLNAQIGIMQPAEVGADVLHMNLHKTFCIPHGGGGPGMGPIGLKAHLAPFAPGHALTDTHSASADQTAVAAAAFGSASILPITWMYLTMMGKQGMEQATRWALLNANYVAKRLSEDYPILYTGKNGRVAHECIVDLRPLKAESGITETDIAKRLMDYGFHAPTVSFPVAGTLMIEPTESESKAELDRFIAALKQIKQEVLKVGRGEWPKEDNPLVNAPHTASDVTGEWAHPYSREEAVFPLPFVREHKFWPSVNRVDDVYGDRNLVCSCPPMENYED.

N6-(pyridoxal phosphate)lysine is present on K698.

It belongs to the GcvP family. As to quaternary structure, the glycine cleavage system is composed of four proteins: P, T, L and H. Pyridoxal 5'-phosphate serves as cofactor.

The enzyme catalyses N(6)-[(R)-lipoyl]-L-lysyl-[glycine-cleavage complex H protein] + glycine + H(+) = N(6)-[(R)-S(8)-aminomethyldihydrolipoyl]-L-lysyl-[glycine-cleavage complex H protein] + CO2. Its function is as follows. The glycine cleavage system catalyzes the degradation of glycine. The P protein binds the alpha-amino group of glycine through its pyridoxal phosphate cofactor; CO(2) is released and the remaining methylamine moiety is then transferred to the lipoamide cofactor of the H protein. In Neisseria meningitidis serogroup C (strain 053442), this protein is Glycine dehydrogenase (decarboxylating).